Reading from the N-terminus, the 119-residue chain is Ribonuclease P protein component (119 aa).

Belongs to the RnpA family. In terms of assembly, consists of a catalytic RNA component (M1 or rnpB) and a protein subunit.

It carries out the reaction Endonucleolytic cleavage of RNA, removing 5'-extranucleotides from tRNA precursor.. In terms of biological role, RNaseP catalyzes the removal of the 5'-leader sequence from pre-tRNA to produce the mature 5'-terminus. It can also cleave other RNA substrates such as 4.5S RNA. The protein component plays an auxiliary but essential role in vivo by binding to the 5'-leader sequence and broadening the substrate specificity of the ribozyme. This Salmonella schwarzengrund (strain CVM19633) protein is Ribonuclease P protein component.